Consider the following 414-residue polypeptide: Diaminopimelate decarboxylase (414 aa).

The residue at position 52 (Lys-52) is an N6-(pyridoxal phosphate)lysine. Residues Gly-231 and 265 to 268 (EPGR) each bind pyridoxal 5'-phosphate. Substrate is bound by residues Arg-268, Arg-304, and Tyr-308. The active-site Proton donor is the Cys-334. Substrate contacts are provided by Glu-335 and Tyr-362. Residue Tyr-362 coordinates pyridoxal 5'-phosphate.

This sequence belongs to the Orn/Lys/Arg decarboxylase class-II family. LysA subfamily. As to quaternary structure, homodimer. Pyridoxal 5'-phosphate is required as a cofactor.

The enzyme catalyses meso-2,6-diaminopimelate + H(+) = L-lysine + CO2. Its pathway is amino-acid biosynthesis; L-lysine biosynthesis via DAP pathway; L-lysine from DL-2,6-diaminopimelate: step 1/1. Its function is as follows. Specifically catalyzes the decarboxylation of meso-diaminopimelate (meso-DAP) to L-lysine. This Neisseria meningitidis serogroup B (strain ATCC BAA-335 / MC58) protein is Diaminopimelate decarboxylase.